The primary structure comprises 1277 residues: Myosin-1 (1277 aa).

Residues 1-13 (MAPSKKAGKKVTP) show a composition bias toward basic residues. The disordered stretch occupies residues 1–27 (MAPSKKAGKKVTPKKAAGNNAKSKVAK). The 680-residue stretch at 39–718 (VGVTDMTLLT…TLFALETMRD (680 aa)) folds into the Myosin motor domain. Residue 132–139 (GESGAGKT) participates in ATP binding. Ser-360 is subject to Phosphoserine. The interval 407–489 (IIGILDIFGF…PGIFAALNDA (83 aa)) is actin-binding. The disordered stretch occupies residues 567–587 (LFPDRPDPNSKKRPPTASDRI). 2 consecutive IQ domains span residues 722–742 (HNMA…KHEC) and 743–768 (ARRI…YGHQ). One can recognise a TH1 domain in the interval 776-965 (RRRFSLLSYR…TVHVPSGEPA (190 aa)). Disordered stretches follow at residues 952–1072 (YKSH…AEPE) and 1129–1259 (PKAA…GPGQ). Positions 1015–1056 (PAVATPSVVSTPAAAAVVSKPKPAASTPAAVRAPAVTPAARS) are enriched in low complexity. Positions 1057–1068 (VPPPPPPPPPAR) are enriched in pro residues. The SH3 domain occupies 1071–1129 (PEKEMYRAKFDFQGQEGEMSLTKDDEVELIEKDENGWWLVKKDGVEAWAPYNYLERIAP). Pro residues predominate over residues 1132-1142 (APAPPPPPARP). 2 stretches are compositionally biased toward polar residues: residues 1145-1159 (TSTV…TTAD) and 1185-1197 (AATT…SSRP). Residues 1204 to 1224 (VPPPVAAKPKPPVVAPKPGVP) are compositionally biased toward pro residues. Over residues 1226–1240 (PGGKPALPTTARPAP) the composition is skewed to low complexity. A compositionally biased stretch (gly residues) spans 1241 to 1258 (SGGGAAAGRLGGGGGGPG).

It belongs to the TRAFAC class myosin-kinesin ATPase superfamily. Myosin family. In terms of processing, phosphorylation of the TEDS site (Ser-360) is required for the polarization of the actin cytoskeleton. Phosphorylation probably activates the myosin-I ATPase activity.

It localises to the cytoplasm. The protein resides in the cytoskeleton. The protein localises to the actin patch. In terms of biological role, type-I myosin implicated in the organization of the actin cytoskeleton. Required for proper actin cytoskeleton polarization. At the cell cortex, assembles in patch-like structures together with proteins from the actin-polymerizing machinery and promotes actin assembly. Functions as actin nucleation-promoting factor (NPF) for the Arp2/3 complex. The protein is Myosin-1 (MYO1) of Coprinopsis cinerea (strain Okayama-7 / 130 / ATCC MYA-4618 / FGSC 9003) (Inky cap fungus).